The following is a 37-amino-acid chain: Lambda-hexatoxin-Hf1a (37 aa).

4 disulfides stabilise this stretch: C4-C18, C11-C23, C14-C15, and C17-C34.

It belongs to the neurotoxin 11 (kappa toxin) family. As to expression, expressed by the venom gland.

The protein localises to the secreted. Its function is as follows. This excitatory toxin inhibits insect calcium-activated potassium (KCa) channels (Slo-type). This Hadronyche formidabilis (Northern tree funnel-web spider) protein is Lambda-hexatoxin-Hf1a.